The following is a 198-amino-acid chain: Dual specificity protein phosphatase 13B (198 aa).

The Tyrosine-protein phosphatase domain maps to 45 to 193; that stretch reads HINEVWPNLF…LQVLDNRLRR (149 aa). Catalysis depends on cysteine 138, which acts as the Phosphocysteine intermediate.

It belongs to the protein-tyrosine phosphatase family. Non-receptor class dual specificity subfamily. In terms of tissue distribution, most abundantly expressed in the testis.

It catalyses the reaction O-phospho-L-tyrosyl-[protein] + H2O = L-tyrosyl-[protein] + phosphate. It carries out the reaction O-phospho-L-seryl-[protein] + H2O = L-seryl-[protein] + phosphate. The enzyme catalyses O-phospho-L-threonyl-[protein] + H2O = L-threonyl-[protein] + phosphate. In terms of biological role, dual specificity phosphatase that dephosphorylates MAPK8/JNK and MAPK14/p38, but not MAPK1/ERK2, in vitro. Exhibits intrinsic phosphatase activity towards both phospho-seryl/threonyl and -tyrosyl residues, with similar specific activities in vitro. The protein is Dual specificity protein phosphatase 13B of Mus musculus (Mouse).